We begin with the raw amino-acid sequence, 624 residues long: Basal cell adhesion molecule (624 aa).

Residues 1 to 25 form the signal peptide; sequence MEPPDARAGLLWLTLLLSGYSGAQA. Ig-like V-type domains are found at residues 26–136 and 141–251; these read ELHV…SSVR and PEAT…HTFR. Topologically, residues 26–543 are extracellular; the sequence is ELHVSVPPRV…GSVAPQTAQA (518 aa). Cystine bridges form between C47–C119, C166–C231, and C285–C331. 3 consecutive Ig-like C2-type domains span residues 268-343, 357-436, and 443-534; these read PSTT…EEVQ, PLEL…QSFQ, and PELK…FHFG. Residues N315, N371, and N378 are each glycosylated (N-linked (GlcNAc...) asparagine). Intrachain disulfides connect C379/C419 and C468/C518. Residues 477 to 497 are disordered; that stretch reads KLTWSQRGDTTPAEPPFEGRG. The helical transmembrane segment at 544–564 threads the bilayer; sequence GVAVMAVAVSVGLLLLVVAAF. The Cytoplasmic segment spans residues 565-624; it reads YCMRRKGRPGCCQRAEKGAPPAREPELSHSGSERPEHTGLLMGGPSGGGRGGNGGFGDEC. Residues 574 to 624 form a disordered region; it reads GCCQRAEKGAPPAREPELSHSGSERPEHTGLLMGGPSGGGRGGNGGFGDEC. The span at 587-601 shows a compositional bias: basic and acidic residues; sequence REPELSHSGSERPEH. 3 positions are modified to phosphoserine: S592, S594, and S596. Residues 605 to 624 are compositionally biased toward gly residues; that stretch reads LMGGPSGGGRGGNGGFGDEC.

Homodimer. Interacts with ITGA4:ITGB1. Interacts with spectrins SPTA1 and SPTB1.

The protein localises to the cell membrane. Its function is as follows. Transmembrane glycoprotein that functions as both a receptor and an adhesion molecule playing a crucial role in cell adhesion, motility, migration and invasion. Extracellular domain enables binding to extracellular matrix proteins, such as laminin, integrin and other ligands while its intracellular domain interacts with cytoskeletal proteins like hemoglobin, facilitating cell signal transduction. Serves as a receptor for laminin alpha-5/LAMA5 to promote cell adhesion. Mechanistically, JAK2 induces BCAM phosphorylation and activates its adhesion to laminin by stimulating a Rap1/AKT signaling pathway in the absence of EPOR. The protein is Basal cell adhesion molecule (Bcam) of Rattus norvegicus (Rat).